A 370-amino-acid chain; its full sequence is DNA replication and repair protein RecF (370 aa).

ATP is bound at residue 30–37 (GENAQGKT).

Belongs to the RecF family.

It is found in the cytoplasm. Functionally, the RecF protein is involved in DNA metabolism; it is required for DNA replication and normal SOS inducibility. RecF binds preferentially to single-stranded, linear DNA. It also seems to bind ATP. The protein is DNA replication and repair protein RecF of Staphylococcus aureus (strain USA300).